A 138-amino-acid chain; its full sequence is Cysteine desulfuration protein SufE (138 aa).

The active-site Cysteine persulfide intermediate is Cys-51.

It belongs to the SufE family. As to quaternary structure, homodimer. Interacts with SufS.

Its subcellular location is the cytoplasm. Its pathway is cofactor biosynthesis; iron-sulfur cluster biosynthesis. Its function is as follows. Participates in cysteine desulfuration mediated by SufS. Cysteine desulfuration mobilizes sulfur from L-cysteine to yield L-alanine and constitutes an essential step in sulfur metabolism for biosynthesis of a variety of sulfur-containing biomolecules. Functions as a sulfur acceptor for SufS, by mediating the direct transfer of the sulfur atom from the S-sulfanylcysteine of SufS, an intermediate product of cysteine desulfuration process. The protein is Cysteine desulfuration protein SufE of Escherichia coli O17:K52:H18 (strain UMN026 / ExPEC).